The primary structure comprises 372 residues: Chaperone protein DnaJ (372 aa).

Residues 5-70 (DYYEVLGVAK…DKRAAYDQFG (66 aa)) form the J domain. Residues 133-211 (GTETKIRIPT…CHGEGRVKKH (79 aa)) form a CR-type zinc finger. Zn(2+) is bound by residues C146, C149, C163, C166, C185, C188, C199, and C202. 4 CXXCXGXG motif repeats span residues 146–153 (CGTCHGSG), 163–170 (CSACGGHG), 185–192 (CPRCGGTG), and 199–206 (CPSCHGEG).

The protein belongs to the DnaJ family. In terms of assembly, homodimer. Requires Zn(2+) as cofactor.

The protein localises to the cytoplasm. Participates actively in the response to hyperosmotic and heat shock by preventing the aggregation of stress-denatured proteins and by disaggregating proteins, also in an autonomous, DnaK-independent fashion. Unfolded proteins bind initially to DnaJ; upon interaction with the DnaJ-bound protein, DnaK hydrolyzes its bound ATP, resulting in the formation of a stable complex. GrpE releases ADP from DnaK; ATP binding to DnaK triggers the release of the substrate protein, thus completing the reaction cycle. Several rounds of ATP-dependent interactions between DnaJ, DnaK and GrpE are required for fully efficient folding. Also involved, together with DnaK and GrpE, in the DNA replication of plasmids through activation of initiation proteins. The polypeptide is Chaperone protein DnaJ (Thiobacillus denitrificans (strain ATCC 25259 / T1)).